The chain runs to 156 residues: Succinate dehydrogenase assembly factor 2-B, mitochondrial (156 aa).

The N-terminal 24 residues, 1-24 (MLRQFIISRVGRRLQLPMITQSRL), are a transit peptide targeting the mitochondrion.

The protein belongs to the SDHAF2 family. As to quaternary structure, interacts with the flavoprotein subunit within the SDH catalytic dimer.

It is found in the mitochondrion matrix. Functionally, plays an essential role in the assembly of succinate dehydrogenase (SDH), an enzyme complex (also referred to as respiratory complex II) that is a component of both the tricarboxylic acid (TCA) cycle and the mitochondrial electron transport chain, and which couples the oxidation of succinate to fumarate with the reduction of ubiquinone (coenzyme Q) to ubiquinol. Required for flavinylation (covalent attachment of FAD) of the flavoprotein subunit of the SDH catalytic dimer. The polypeptide is Succinate dehydrogenase assembly factor 2-B, mitochondrial (Drosophila sechellia (Fruit fly)).